The following is a 1027-amino-acid chain: LLGL scribble cell polarity complex component 2 (1027 aa).

WD repeat units lie at residues 36-69 (SALGYSPSLRILAIGTRSGAVKLYGAPGVEFMGL), 76-117 (VLQI…EESF), 132-169 (VTEILPHSSGELLYLGTESGNVFVVQLPGFRTLHDRTI), 193-227 (ALQEHPRDPNQILIGYSRGLVVIWDLQGSRALSHF), 233-268 (LENASWQRDGCLIVTCHSDGSHCQWPVSSDTQNPEP), 282-324 (AITK…GQQT), 332-366 (VIDFTVLSEADPAAAFDDPYALVVLAEEELVVIDL), 388-464 (TCSH…YKLS), 508-583 (QKIF…FVLV), and 592-653 (TSLA…LRQS). A Phosphoserine modification is found at serine 653. The segment covering 654–669 (FRRMRRSRVSSHKRRP) has biased composition (basic residues). The segment at 654–678 (FRRMRRSRVSSHKRRPGGPTGEAQA) is disordered. WD repeat units lie at residues 715 to 771 (VRTL…KEIQ), 780 to 832 (GILV…VSAK), 837 to 890 (LTAL…VRYS), and 904 to 927 (VFTKYGQGFYLISPSEFERFSLST). The tract at residues 940 to 981 (TKAKKHNRPSNGNGTGLKMTSSGHVRNSKSQSDGDEKKPGPV) is disordered. A compositionally biased stretch (polar residues) spans 957–970 (KMTSSGHVRNSKSQ). 2 positions are modified to phosphoserine: serine 971 and serine 1022.

The protein belongs to the WD repeat L(2)GL family. In terms of assembly, interacts with GPSM2/LGN, PRKCI/aPKC and PARD6B/Par-6. The complex is enhanced during mitosis. Interacts with DCAF1. Post-translationally, phosphorylated at Ser-653 by PRKCI. Phosphorylation is enhanced during cell polarization induced by calcium. Phosphorylation may occur during the cell-cell contact-induced cell polarization and may contribute to the segregation of LLGL2 from the PRKCI/aPKC and PARD6B/Par-6 complex.

The protein resides in the cytoplasm. In terms of biological role, part of a complex with GPSM2/LGN, PRKCI/aPKC and PARD6B/Par-6, which may ensure the correct organization and orientation of bipolar spindles for normal cell division. This complex plays roles in the initial phase of the establishment of epithelial cell polarity. In Mus musculus (Mouse), this protein is LLGL scribble cell polarity complex component 2 (Llgl2).